Reading from the N-terminus, the 110-residue chain is Flagellar hook-basal body complex protein FliE (110 aa).

It belongs to the FliE family.

Its subcellular location is the bacterial flagellum basal body. This Bordetella petrii (strain ATCC BAA-461 / DSM 12804 / CCUG 43448) protein is Flagellar hook-basal body complex protein FliE.